A 357-amino-acid polypeptide reads, in one-letter code: MSSATAAATATIAAAAAAAAKLAATPAPAPSRRRLTLRGNPTARRCVAAMAVSTPRSAAAAAFLERRESERALHFVKYQGLGNDFIMMDNRDSAVPKVTPEEAAKLCDRNFGVGADGVIFVMPGVNGADYTMRIFNSDGSEPEMCGNGVRCFARFIAELENLQGTHSFKIHTGAGLIIPEIQNDGKVKVDMGQPILSGPDIPTKLPSTKNEAVVQADLAVDGSTWQVTCVSMGNPHCVTFGTKELKVLHVDDLKLSDIGPKFEHHEMFPARTNTEFVEVLSRSHLKMRVWERGAGATLACGTGACAVVVAAVLEGRAERKCVVDLPGGPLEIEWREDDNHIYMTGPAEAVFYGSAVH.

A chloroplast-targeting transit peptide spans 1–47; it reads MSSATAAATATIAAAAAAAAKLAATPAPAPSRRRLTLRGNPTARRCV. Catalysis depends on residues C145 and C300.

This sequence belongs to the diaminopimelate epimerase family.

It localises to the plastid. The protein localises to the chloroplast. It carries out the reaction (2S,6S)-2,6-diaminopimelate = meso-2,6-diaminopimelate. Its pathway is amino-acid biosynthesis; L-lysine biosynthesis via DAP pathway; DL-2,6-diaminopimelate from LL-2,6-diaminopimelate: step 1/1. This chain is Putative diaminopimelate epimerase, chloroplastic (DAPF), found in Oryza sativa subsp. indica (Rice).